A 423-amino-acid polypeptide reads, in one-letter code: tRNA-dihydrouridine(16/17) synthase [NAD(P)(+)] (423 aa).

T2 carries the N-acetylthreonine modification. FMN-binding positions include 35 to 37 (PMV) and Q92. Residue C121 is the Proton donor of the active site. FMN-binding positions include K160, H188, 223–225 (NGN), and 247–248 (AE). The disordered stretch occupies residues 404–423 (KKRKADVPLESADKKKDVKA). The segment covering 408 to 423 (ADVPLESADKKKDVKA) has biased composition (basic and acidic residues).

This sequence belongs to the Dus family. Dus1 subfamily. In terms of assembly, monomer. FMN is required as a cofactor.

The enzyme catalyses 5,6-dihydrouridine(16) in tRNA + NADP(+) = uridine(16) in tRNA + NADPH + H(+). It carries out the reaction 5,6-dihydrouridine(16) in tRNA + NAD(+) = uridine(16) in tRNA + NADH + H(+). The catalysed reaction is 5,6-dihydrouridine(17) in tRNA + NAD(+) = uridine(17) in tRNA + NADH + H(+). It catalyses the reaction 5,6-dihydrouridine(17) in tRNA + NADP(+) = uridine(17) in tRNA + NADPH + H(+). The enzyme catalyses a 5,6-dihydrouridine in mRNA + NAD(+) = a uridine in mRNA + NADH + H(+). It carries out the reaction a 5,6-dihydrouridine in mRNA + NADP(+) = a uridine in mRNA + NADPH + H(+). Its function is as follows. Catalyzes the synthesis of dihydrouridine, a modified base found in the D-loop of most tRNAs. Specifically modifies U16 and U17 in cytoplasmic tRNAs. Also able to mediate dihydrouridylation of some mRNAs, thereby affecting their translation. The sequence is that of tRNA-dihydrouridine(16/17) synthase [NAD(P)(+)] from Saccharomyces cerevisiae (strain ATCC 204508 / S288c) (Baker's yeast).